Consider the following 244-residue polypeptide: Purine nucleoside phosphorylase HI_0175 (244 aa).

Residues histidine 70, cysteine 105, and histidine 122 each contribute to the Zn(2+) site.

Belongs to the purine nucleoside phosphorylase YfiH/LACC1 family. As to quaternary structure, homodimer. Cu(2+) is required as a cofactor. It depends on Zn(2+) as a cofactor.

The enzyme catalyses adenosine + phosphate = alpha-D-ribose 1-phosphate + adenine. The catalysed reaction is S-methyl-5'-thioadenosine + phosphate = 5-(methylsulfanyl)-alpha-D-ribose 1-phosphate + adenine. It catalyses the reaction inosine + phosphate = alpha-D-ribose 1-phosphate + hypoxanthine. It carries out the reaction adenosine + H2O + H(+) = inosine + NH4(+). Its function is as follows. Purine nucleoside enzyme that catalyzes the phosphorolysis of adenosine and inosine nucleosides, yielding D-ribose 1-phosphate and the respective free bases, adenine and hypoxanthine. Also catalyzes the phosphorolysis of S-methyl-5'-thioadenosine into adenine and S-methyl-5-thio-alpha-D-ribose 1-phosphate. Also has adenosine deaminase activity. The sequence is that of Purine nucleoside phosphorylase HI_0175 from Haemophilus influenzae (strain ATCC 51907 / DSM 11121 / KW20 / Rd).